Here is a 410-residue protein sequence, read N- to C-terminus: Proteasomal ubiquitin receptor ADRM1 (410 aa).

The 114-residue stretch at 17 to 130 folds into the Pru domain; it reads SSSKYLVEFR…RKVNEYLNNP (114 aa). Position 18 is a phosphoserine (S18). Positions 191–257 are enriched in low complexity; sequence GSGGPATSSS…PAAQTPSLPA (67 aa). Disordered regions lie at residues 191-264 and 381-410; these read GSGG…SSTQ and FAKAMEGSDSKTDDGDSKDKKDDDEDMSLD. Residues 281-395 form the DEUBAD domain; that stretch reads PAMPTEGSGV…EGSDSKTDDG (115 aa). Positions 381 to 401 are enriched in basic and acidic residues; the sequence is FAKAMEGSDSKTDDGDSKDKK.

It belongs to the ADRM1 family. Component of the 19S proteasome regulatory particle complex. The 26S proteasome consists of a 20S core particle (CP) and two 19S regulatory subunits (RP).

Its subcellular location is the cytoplasm. The protein localises to the nucleus. In terms of biological role, component of the 26S proteasome, a multiprotein complex involved in the ATP-dependent degradation of ubiquitinated proteins. This complex plays a key role in the maintenance of protein homeostasis by removing misfolded or damaged proteins, which could impair cellular functions, and by removing proteins whose functions are no longer required. Therefore, the proteasome participates in numerous cellular processes, including cell cycle progression, apoptosis, or DNA damage repair. Within the complex, functions as a proteasomal ubiquitin receptor. This is Proteasomal ubiquitin receptor ADRM1 (adrm1b) from Danio rerio (Zebrafish).